Reading from the N-terminus, the 460-residue chain is Dihydroorotate dehydrogenase (quinone), mitochondrial (460 aa).

The N-terminal 32 residues, 1–32 (MAGRAATSSAKWAREFLFRRVSSNPLGATRNC), are a transit peptide targeting the mitochondrion. Residues 53–69 (ILTGATIGLAIAGGAYV) form a helical membrane-spanning segment. Residues 141–145 (AGFDK) and serine 165 each bind FMN. Position 145 (lysine 145) interacts with substrate. 190-194 (NRCGF) contributes to the substrate binding site. The segment at 213–245 (RMLAETSATSSSPSDDVKPGGKSGPGILGVNLG) is disordered. FMN contacts are provided by asparagine 243 and asparagine 274. 274-279 (NVSSPN) serves as a coordination point for substrate. The Nucleophile role is filled by serine 277. Lysine 319 and serine 347 together coordinate FMN. 348 to 349 (NT) lines the substrate pocket. Residues glycine 371, glycine 400, and 421–422 (YT) each bind FMN.

This sequence belongs to the dihydroorotate dehydrogenase family. Type 2 subfamily. FMN is required as a cofactor.

The protein localises to the mitochondrion inner membrane. The catalysed reaction is (S)-dihydroorotate + a quinone = orotate + a quinol. The protein operates within pyrimidine metabolism; UMP biosynthesis via de novo pathway; orotate from (S)-dihydroorotate (quinone route): step 1/1. Functionally, catalyzes the conversion of dihydroorotate to orotate with quinone as electron acceptor. The chain is Dihydroorotate dehydrogenase (quinone), mitochondrial (PYRD) from Arabidopsis thaliana (Mouse-ear cress).